The following is a 219-amino-acid chain: Cytidylate kinase (219 aa).

15–23 (GPAASGKGT) contacts ATP.

The protein belongs to the cytidylate kinase family. Type 1 subfamily.

The protein resides in the cytoplasm. It carries out the reaction CMP + ATP = CDP + ADP. It catalyses the reaction dCMP + ATP = dCDP + ADP. This chain is Cytidylate kinase, found in Brucella melitensis biotype 1 (strain ATCC 23456 / CCUG 17765 / NCTC 10094 / 16M).